Here is a 247-residue protein sequence, read N- to C-terminus: Protein Thf1 (247 aa).

Residues 198–224 (IAQVRQAMDDILEAQKKRREADQAKKE) adopt a coiled-coil conformation. The segment at 209-247 (LEAQKKRREADQAKKEGSDDTPTTEASTPDSEPTSEVSS) is disordered. The segment covering 210–226 (EAQKKRREADQAKKEGS) has biased composition (basic and acidic residues). Residues 228–247 (DTPTTEASTPDSEPTSEVSS) are compositionally biased toward polar residues.

It belongs to the THF1 family.

In terms of biological role, may be involved in photosynthetic membrane biogenesis. This chain is Protein Thf1, found in Acaryochloris marina (strain MBIC 11017).